Reading from the N-terminus, the 1568-residue chain is Kielin/chordin-like protein (1568 aa).

The signal sequence occupies residues 1–23 (MAGVGAAALSLLLHLGALALAAG). Residues 27 to 49 (GAVPREPPGQQTTAHSSVLAGNS) form a disordered region. A compositionally biased stretch (polar residues) spans 35–49 (GQQTTAHSSVLAGNS). Residues 60–87 (LGRLEAAVMELREQNKDLQTRVRQLESC) adopt a coiled-coil conformation. 16 consecutive VWFC domains span residues 136-193 (RGCS…PICR), 194-253 (PGCD…PTCQ), 253-312 (QGCT…PVCD), 312-370 (DGCF…PVCD), 426-485 (PACE…PSCD), 485-544 (DSCT…PRCP), 544-602 (PDCI…NDCS), 602-661 (SGCA…PQCP), 667-725 (AGCP…PSCD), 725-782 (DGCL…PDCD), 782-841 (DGCE…PTCQ), 900-959 (HSCL…PRCR), 959-1017 (RGCL…PQCS), 1017-1085 (SDCE…PTCA), 1082-1145 (PTCA…PVCR), and 1149-1209 (QSCV…PRCL). Asparagine 340 carries N-linked (GlcNAc...) asparagine glycosylation. The N-linked (GlcNAc...) asparagine glycan is linked to asparagine 499. Asparagine 1090 is a glycosylation site (N-linked (GlcNAc...) asparagine). Residues 1213-1389 (ASCMAFGDPH…EGLWPGRPCS (177 aa)) form the VWFD domain. 2 cysteine pairs are disulfide-bonded: cysteine 1215–cysteine 1347 and cysteine 1237–cysteine 1388. The region spanning 1483–1543 (CPLERGFVFD…EAHCIPPEAC (61 aa)) is the TIL domain.

Interacts with BMP7 and, by doing so, enhances binding to the type I receptors that contains cytoplasmic serine/threonine protein kinase domains. Also able to interact with activin-A and TGFB1.

It localises to the secreted. Functionally, enhances bone morphogenetic protein (BMP) signaling in a paracrine manner. In contrast, it inhibits both the activin-A and TGFB1-mediated signaling pathways. The protein is Kielin/chordin-like protein of Homo sapiens (Human).